A 583-amino-acid polypeptide reads, in one-letter code: Laccase-21 (583 aa).

Positions 1-29 (MGIAKIPAVLWLLACAVLTFAVAISPAHG) are cleaved as a signal peptide. Plastocyanin-like domains are found at residues 39-155 (FITE…PKHG) and 165-323 (KEIP…YYTG). A glycan (N-linked (GlcNAc...) asparagine) is linked at Asn85. 4 residues coordinate Cu cation: His89, His91, His134, and His136. 7 N-linked (GlcNAc...) asparagine glycosylation sites follow: Asn282, Asn311, Asn384, Asn387, Asn399, Asn409, and Asn446. The region spanning 436–567 (FPNNPAPVFV…NTVFIVKDGK (132 aa)) is the Plastocyanin-like 3 domain. Positions 484, 487, 489, 546, 547, 548, 552, and 557 each coordinate Cu cation.

This sequence belongs to the multicopper oxidase family. It depends on Cu cation as a cofactor.

It localises to the secreted. The protein resides in the extracellular space. Its subcellular location is the apoplast. It carries out the reaction 4 hydroquinone + O2 = 4 benzosemiquinone + 2 H2O. Functionally, lignin degradation and detoxification of lignin-derived products. In Oryza sativa subsp. japonica (Rice), this protein is Laccase-21 (LAC21).